The chain runs to 326 residues: DNA-directed RNA polymerase subunit alpha (326 aa).

The alpha N-terminal domain (alpha-NTD) stretch occupies residues 1-230; it reads MLKIEKQAKA…LHLDPFLEIG (230 aa). The segment at 249 to 326 is alpha C-terminal domain (alpha-CTD); it reads DIQVIDDKSH…YDLEKNGSPE (78 aa).

It belongs to the RNA polymerase alpha chain family. In terms of assembly, homodimer. The RNAP catalytic core consists of 2 alpha, 1 beta, 1 beta' and 1 omega subunit. When a sigma factor is associated with the core the holoenzyme is formed, which can initiate transcription.

It carries out the reaction RNA(n) + a ribonucleoside 5'-triphosphate = RNA(n+1) + diphosphate. Its function is as follows. DNA-dependent RNA polymerase catalyzes the transcription of DNA into RNA using the four ribonucleoside triphosphates as substrates. This Fusobacterium nucleatum subsp. nucleatum (strain ATCC 25586 / DSM 15643 / BCRC 10681 / CIP 101130 / JCM 8532 / KCTC 2640 / LMG 13131 / VPI 4355) protein is DNA-directed RNA polymerase subunit alpha.